The following is a 441-amino-acid chain: Xaa-Pro aminopeptidase (441 aa).

Residues Asp261, Asp272, His355, Glu384, and Glu407 each contribute to the Mn(2+) site.

Belongs to the peptidase M24B family. As to quaternary structure, homotetramer. The cofactor is Mn(2+).

It localises to the cytoplasm. It catalyses the reaction Release of any N-terminal amino acid, including proline, that is linked to proline, even from a dipeptide or tripeptide.. The polypeptide is Xaa-Pro aminopeptidase (pepP) (Escherichia coli (strain K12)).